The sequence spans 289 residues: Acetyl-coenzyme A carboxylase carboxyl transferase subunit beta (289 aa).

A CoA carboxyltransferase N-terminal domain is found at L28–A289. The Zn(2+) site is built by C32, C35, C51, and C54. The segment at C32–C54 adopts a C4-type zinc-finger fold.

It belongs to the AccD/PCCB family. In terms of assembly, acetyl-CoA carboxylase is a heterohexamer composed of biotin carboxyl carrier protein (AccB), biotin carboxylase (AccC) and two subunits each of ACCase subunit alpha (AccA) and ACCase subunit beta (AccD). Requires Zn(2+) as cofactor.

It localises to the cytoplasm. The enzyme catalyses N(6)-carboxybiotinyl-L-lysyl-[protein] + acetyl-CoA = N(6)-biotinyl-L-lysyl-[protein] + malonyl-CoA. It participates in lipid metabolism; malonyl-CoA biosynthesis; malonyl-CoA from acetyl-CoA: step 1/1. In terms of biological role, component of the acetyl coenzyme A carboxylase (ACC) complex. Biotin carboxylase (BC) catalyzes the carboxylation of biotin on its carrier protein (BCCP) and then the CO(2) group is transferred by the transcarboxylase to acetyl-CoA to form malonyl-CoA. The sequence is that of Acetyl-coenzyme A carboxylase carboxyl transferase subunit beta from Dechloromonas aromatica (strain RCB).